The sequence spans 89 residues: cAMP-regulated phosphoprotein 21 (89 aa).

Residues 1-89 (MSEQGDLNQA…GGESLQDQTL (89 aa)) are disordered. Serine 2 carries the post-translational modification N-acetylserine. Low complexity predominate over residues 9–25 (QAIAEEGGTEQETATPE). Serine 33 is modified (phosphoserine). Positions 40–53 (LELQRRLEAQNQER) are enriched in basic and acidic residues. A Phosphoserine modification is found at serine 56.

In terms of assembly, interacts with CALM1. In terms of processing, phosphorylation at Ser-56 favors interaction with CALM1.

The protein resides in the cytoplasm. In terms of biological role, may act as a competitive inhibitor of calmodulin-dependent enzymes such as calcineurin in neurons. In Pongo abelii (Sumatran orangutan), this protein is cAMP-regulated phosphoprotein 21 (ARPP21).